The chain runs to 820 residues: Phospholipase D alpha 3 (820 aa).

A C2 domain is found at M1–L133. D194 provides a ligand contact to Ca(2+). The PLD phosphodiesterase 1 domain maps to T334–R371. Catalysis depends on residues H339, K341, and D346. H339 contributes to the a 1,2-diacyl-sn-glycero-3-phosphate binding site. 2 residues coordinate Ca(2+): H377 and H411. The a 1,2-diacyl-sn-glycero-3-phosphate site is built by Q528 and H667. In terms of domain architecture, PLD phosphodiesterase 2 spans F662–S689. Catalysis depends on residues H667, K669, and D674. E730 lines the Ca(2+) pocket.

This sequence belongs to the phospholipase D family. C2-PLD subfamily. Requires Ca(2+) as cofactor. In terms of tissue distribution, expressed in buds, flowers, siliques, stems, old leaves and roots. Expressed in the sieve elements.

The protein resides in the cytoplasm. The protein localises to the membrane. The catalysed reaction is a 1,2-diacyl-sn-glycero-3-phosphocholine + H2O = a 1,2-diacyl-sn-glycero-3-phosphate + choline + H(+). Functionally, hydrolyzes glycerol-phospholipids at the terminal phosphodiesteric bond to generate phosphatidic acids (PA). Active with phosphatidylcholine (PC), phosphatidylethanolamine (PE), phosphatidylglycerol (PG), and phosphatidylserine (PS) as substrates. No activity toward phosphatidylinositol (PI) or PIP2. Positively mediates plant responses to hyperosmotic stresses and promotes root growth, flowering, and stress avoidance. Not involved in the abscisic acid regulation of stomatal movement and transpirational water loss. In Arabidopsis thaliana (Mouse-ear cress), this protein is Phospholipase D alpha 3.